A 356-amino-acid chain; its full sequence is Fructose-bisphosphate aldolase 1, chloroplastic (356 aa).

Residues 1-6 (GLTIRA) constitute a chloroplast transit peptide. The substrate site is built by Arg-53 and Lys-143. Residue Glu-183 is the Proton acceptor of the active site. The Schiff-base intermediate with dihydroxyacetone-P role is filled by Lys-225.

Belongs to the class I fructose-bisphosphate aldolase family.

It localises to the plastid. It is found in the chloroplast. It carries out the reaction beta-D-fructose 1,6-bisphosphate = D-glyceraldehyde 3-phosphate + dihydroxyacetone phosphate. The protein operates within carbohydrate degradation; glycolysis; D-glyceraldehyde 3-phosphate and glycerone phosphate from D-glucose: step 4/4. The chain is Fructose-bisphosphate aldolase 1, chloroplastic from Pisum sativum (Garden pea).